The chain runs to 285 residues: Nurim (285 aa).

Residues 1–16 (MSANVQVSGQLSSGPS) are Nuclear-facing. Residues 17–44 (LPACIVLSAVSLLCFVAGFGTGAEFVRF) form a helical membrane-spanning segment. Topologically, residues 45–74 (LSFGAIFRNISGGLDGEIPLTWSEAIRNTQ) are perinuclear space. The helical transmembrane segment at 75–96 (FQCCIGIDIGLLFLFVLQHSLM) threads the bilayer. At 97-113 (AWTAVKKNVLHVFGVLQ) the chain is on the nuclear side. A helical transmembrane segment spans residues 114–130 (RSIYILCTALSLQVLMR). Residues 131 to 149 (FWQPCPHGPYLWNVSSDPW) lie on the Perinuclear space side of the membrane. A helical membrane pass occupies residues 150 to 180 (SAWLPLLCALVHTISWLLIFSVLLIFDYAEL). Over 181-207 (MGIKQVYYFCLGMGDPLSHKSPRVARL) the chain is Nuclear. A helical membrane pass occupies residues 208–226 (YAHLRHPIYLELLLILWAV). Over 227-232 (PCLPPD) the chain is Perinuclear space. Residues 233-250 (RLILAIFFTLYLSLVHRL) form a helical membrane-spanning segment. The Nuclear segment spans residues 251–285 (DVQDYAYLRSQLEKKFLLFSREEASAVGGQIRKNN).

It belongs to the nurim family.

It is found in the nucleus inner membrane. This chain is Nurim (nrm), found in Xenopus laevis (African clawed frog).